Here is a 468-residue protein sequence, read N- to C-terminus: Arginine biosynthesis bifunctional protein ArgJ, mitochondrial (468 aa).

The N-terminal 23 residues, 1-23, are a transit peptide targeting the mitochondrion; the sequence is MVGFSRCALSQLRQPKAQLVRSF. 6 residues coordinate substrate: Thr198, Lys227, Thr238, Glu324, Asn463, and Thr468. The Nucleophile role is filled by Thr238.

The protein belongs to the ArgJ family. Heterodimer of an alpha and a beta chain. In terms of processing, the alpha and beta chains are autoproteolytically processed from a single precursor protein within the mitochondrion.

It localises to the mitochondrion matrix. The catalysed reaction is N(2)-acetyl-L-ornithine + L-glutamate = N-acetyl-L-glutamate + L-ornithine. The enzyme catalyses L-glutamate + acetyl-CoA = N-acetyl-L-glutamate + CoA + H(+). Its pathway is amino-acid biosynthesis; L-arginine biosynthesis; L-ornithine and N-acetyl-L-glutamate from L-glutamate and N(2)-acetyl-L-ornithine (cyclic): step 1/1. The protein operates within amino-acid biosynthesis; L-arginine biosynthesis; N(2)-acetyl-L-ornithine from L-glutamate: step 1/4. Functionally, catalyzes two activities which are involved in the cyclic version of arginine biosynthesis: the synthesis of acetylglutamate from glutamate and acetyl-CoA, and of ornithine by transacetylation between acetylornithine and glutamate. This chain is Arginine biosynthesis bifunctional protein ArgJ, mitochondrial, found in Podospora anserina (strain S / ATCC MYA-4624 / DSM 980 / FGSC 10383) (Pleurage anserina).